The sequence spans 99 residues: Integration host factor subunit alpha (99 aa).

Positions 49 to 72 (FGNFDLRDKNQRPGRNPKTGEDIP) are disordered.

Belongs to the bacterial histone-like protein family. As to quaternary structure, heterodimer of an alpha and a beta chain.

This protein is one of the two subunits of integration host factor, a specific DNA-binding protein that functions in genetic recombination as well as in transcriptional and translational control. The protein is Integration host factor subunit alpha of Escherichia coli O9:H4 (strain HS).